The following is a 1364-amino-acid chain: MFSSTLHEDGPATRTRSSRRRQRPVASDSSLQTQPKAKRQRVPLTESNTAPTPTPADADAPPEMFEVKPDPVLAKRERDGIGIENIENLGPRRELSLRSKKPKSGERTSKGDGSIILTTNNAFTVSKLPALPDRLRAEPTSRQHGAIFSSGYALALTHTHAFVWPYTATTASPETFTFALPYPSKHASDPLPLGALVPPSASSDDPGLVVVMPVSGRVVYWESISSAATLDFIRQQRTGIEDAISGMYSSEHITQLVSAESAGFVLVFSSGRIAYMSVRDPHGRPGITVQYLRSPFGGASLGFLSTLRHALSGSSRGDIAAAHANHGPRVGERVVIAASSKGRLQAWKIHRGGHHEPVAEADVRERLVEAVNEADAKTQAFPSESFEVLDFAFVPRGLEPKYVNASRLSEALTHEEDSLQHMLLLVGFSRGHQARYSLVETVLAPEGARIGTVRPITSYTSPVRPGALEKPRLYLPRPALVAFVVFDRAVVVASMVAPPDSPDSQLQEDSHILPPTFEDVVDFRDDDTLQVVGSGSEEPGAGTSSEDVRPHRHKTKNPTAVLLLPGVGIVRVAITDIERFASDAPPRVTAKSKLEQAVFFGIKSDNPLVFQGRRALPFSDREVCDAAVELSHEIVNSKTPFIPSVPASLEGNMKSRSAYLDALITFLNACKVNMDERTRWMLLYDAEKMAVATWIWQKHEQFLAERPRADKKTLISEAAVFINENQKTELNVAAGQVDPVRHWFIHDIFRLDIFVAWAYQIIKYHYTQKLSDEPGLNRLVWEAVTINNGALLEARQFRLDKAAQYGVDPAVVPTGNGLPEPWTSTYFITNNLKRLTEFCHQWLAKHDAQPSADPRFDARLLDTVRERLPSLTSQYFTSLSEYITWAASSTDPETQDRCRAYQAAYAEDVYKKIVKLKEFDLWEEAVELAREFEAFDALADVVVGQILMLEAAAADPTTTESKAQENAALAQVKKQRLGRLMEEFGEGFASRAYEVLLDAAGVQAVLEFAFDRKGFITKWLRGKPELARISWVNEVLREGDVGGAAETLLGLGMSREVQVWNKKVELSLGKLALLAEGGGSDDEAGKGEVGGTIKKIDAELEVVKVQDLLYQWILASVHEAVDSSAEVELAVKQFGGLIPRRQKALLQIFEDGIARLLKHEVLDPLTLIDLLTLSSLGPGHYEGMGDQFFLALKVAHYAALENAEEVRRLIWRRCLVRDDWRQVNETNLKGDEEALEAVGETAAYRTLFACFDEESSTPTFRPHHTLKPSDCLGVYTEPEQLDSRFAAMDDSFRGKLVEAMRAEDRLLRGFVEKAQLDEWWRATRETAERMVGVAAQKGHRRVNSGSVGNGGVNGLSLNGRVKMY.

A compositionally biased stretch (basic and acidic residues) spans 1–11 (MFSSTLHEDGP). Disordered stretches follow at residues 1–114 (MFSS…GDGS) and 531–554 (VVGSGSEEPGAGTSSEDVRPHRHK). Residues 49–62 (TAPTPTPADADAPP) are compositionally biased toward low complexity. Composition is skewed to basic and acidic residues over residues 65-81 (FEVKPDPVLAKRERDGI) and 90-110 (GPRRELSLRSKKPKSGERTSK).

It belongs to the nucleoporin Nup133 family. As to quaternary structure, component of the nuclear pore complex (NPC). NPC constitutes the exclusive means of nucleocytoplasmic transport. NPCs allow the passive diffusion of ions and small molecules and the active, nuclear transport receptor-mediated bidirectional transport of macromolecules such as proteins, RNAs, ribonucleoparticles (RNPs), and ribosomal subunits across the nuclear envelope. Due to its 8-fold rotational symmetry, all subunits are present with 8 copies or multiples thereof.

The protein resides in the nucleus. The protein localises to the nuclear pore complex. It localises to the nucleus membrane. In terms of biological role, functions as a component of the nuclear pore complex (NPC). NPC components, collectively referred to as nucleoporins (NUPs), can play the role of both NPC structural components and of docking or interaction partners for transiently associated nuclear transport factors. NUP133 is involved in nuclear poly(A)+ RNA, tRNA and pre-ribosome export, in GSP1 nuclear import, in NPC assembly and distribution, as well as in nuclear envelope organization. The polypeptide is Nucleoporin NUP133 (NUP133) (Chaetomium thermophilum (strain DSM 1495 / CBS 144.50 / IMI 039719) (Thermochaetoides thermophila)).